The sequence spans 67 residues: Alpha-actitoxin-Ms11a-3 (67 aa).

A signal peptide spans 1-24; that stretch reads MASKIFFVLAVFLVMSAVLPESFA. Disulfide bonds link Cys-26/Cys-41, Cys-33/Cys-46, and Cys-40/Cys-61. Lys-66 carries the lysine amide modification.

It localises to the secreted. It is found in the nematocyst. Alpha-toxins act on postsynaptic membranes, they bind to the nicotinic acetylcholine receptors (nAChR) and thus inhibit them. This toxin shows inhibition against mouse alpha-1-beta-1-delta-epsilon (CHRNA1-CHRNB1-CHRND-CHRNE) (IC(50)=1215 nM), rat alpha-3-beta-4/CHRNA3-CHRNB4 (IC(50)=5.173 uM), rat alpha-7/CHRNA7 (IC(50)=4.786 uM), human alpha-7/CHRNA7 (IC(50)=8.869 uM), and rat alpha-9-alpha-10/CHRNA9-CHRNA10 (IC(50)=202 nM). Also competes with alpha-bungarotoxin for binding to orthosteric sites on muscle-type T.carlifornicus (IC(50)=256 nM) and human alpha-7/CHRNA7 nAChRs (IC(50)=19.81 uM). The sequence is that of Alpha-actitoxin-Ms11a-3 from Metridium senile (Brown sea anemone).